The following is an 86-amino-acid chain: Acyl carrier protein (86 aa).

Positions 10-85 (DKIEQKVIEM…DVIQYIKERQ (76 aa)) constitute a Carrier domain. S45 carries the O-(pantetheine 4'-phosphoryl)serine modification.

It belongs to the acyl carrier protein (ACP) family. In terms of processing, 4'-phosphopantetheine is transferred from CoA to a specific serine of apo-ACP by AcpS. This modification is essential for activity because fatty acids are bound in thioester linkage to the sulfhydryl of the prosthetic group.

The protein localises to the cytoplasm. It functions in the pathway lipid metabolism; fatty acid biosynthesis. Functionally, carrier of the growing fatty acid chain in fatty acid biosynthesis. The protein is Acyl carrier protein of Rickettsia canadensis (strain McKiel).